Here is a 160-residue protein sequence, read N- to C-terminus: Crossover junction endodeoxyribonuclease RuvC (160 aa).

Residues D7, E70, and D142 contribute to the active site. Mg(2+) is bound by residues D7, E70, and D142.

Belongs to the RuvC family. Homodimer which binds Holliday junction (HJ) DNA. The HJ becomes 2-fold symmetrical on binding to RuvC with unstacked arms; it has a different conformation from HJ DNA in complex with RuvA. In the full resolvosome a probable DNA-RuvA(4)-RuvB(12)-RuvC(2) complex forms which resolves the HJ. Requires Mg(2+) as cofactor.

The protein localises to the cytoplasm. The catalysed reaction is Endonucleolytic cleavage at a junction such as a reciprocal single-stranded crossover between two homologous DNA duplexes (Holliday junction).. Functionally, the RuvA-RuvB-RuvC complex processes Holliday junction (HJ) DNA during genetic recombination and DNA repair. Endonuclease that resolves HJ intermediates. Cleaves cruciform DNA by making single-stranded nicks across the HJ at symmetrical positions within the homologous arms, yielding a 5'-phosphate and a 3'-hydroxyl group; requires a central core of homology in the junction. The consensus cleavage sequence is 5'-(A/T)TT(C/G)-3'. Cleavage occurs on the 3'-side of the TT dinucleotide at the point of strand exchange. HJ branch migration catalyzed by RuvA-RuvB allows RuvC to scan DNA until it finds its consensus sequence, where it cleaves and resolves the cruciform DNA. In Ehrlichia ruminantium (strain Gardel), this protein is Crossover junction endodeoxyribonuclease RuvC.